Reading from the N-terminus, the 405-residue chain is Acetate kinase (405 aa).

Position 7 (Asn-7) interacts with Mg(2+). Lys-14 provides a ligand contact to ATP. Arg-99 lines the substrate pocket. Catalysis depends on Asp-156, which acts as the Proton donor/acceptor. Residues 215–219 (HLGNG), 290–292 (DMR), and 338–342 (GVGEH) contribute to the ATP site. Glu-391 serves as a coordination point for Mg(2+).

This sequence belongs to the acetokinase family. In terms of assembly, homodimer. Requires Mg(2+) as cofactor. Mn(2+) serves as cofactor.

The protein resides in the cytoplasm. The catalysed reaction is acetate + ATP = acetyl phosphate + ADP. It functions in the pathway metabolic intermediate biosynthesis; acetyl-CoA biosynthesis; acetyl-CoA from acetate: step 1/2. In terms of biological role, catalyzes the formation of acetyl phosphate from acetate and ATP. Can also catalyze the reverse reaction. The chain is Acetate kinase from Nostoc punctiforme (strain ATCC 29133 / PCC 73102).